We begin with the raw amino-acid sequence, 396 residues long: Cell division protein FtsZ 1 (396 aa).

Residues 1–38 (MDSIVQDAIDEAEESEDSASEPADVAGGGGDTVPTGTM) form a disordered region. Positions 8–19 (AIDEAEESEDSA) are enriched in acidic residues. GTP-binding positions include 61-65 (GAGSN), 148-150 (GTG), glutamate 179, arginine 183, and aspartate 226. Residues 358–396 (QIYGRNEAAEGDGPAQESTPEPEPEPQAGSEIEDIDYVE) form a disordered region.

Belongs to the FtsZ family. As to quaternary structure, homodimer. Polymerizes to form a dynamic ring structure in a strictly GTP-dependent manner. Interacts directly with several other division proteins.

The protein resides in the cytoplasm. Its function is as follows. Essential cell division protein that forms a contractile ring structure (Z ring) at the future cell division site. The regulation of the ring assembly controls the timing and the location of cell division. One of the functions of the FtsZ ring is to recruit other cell division proteins to the septum to produce a new cell wall between the dividing cells. Binds GTP and shows GTPase activity. The protein is Cell division protein FtsZ 1 of Halobacterium salinarum (strain ATCC 29341 / DSM 671 / R1).